The primary structure comprises 291 residues: Arabinogalactan O-methyltransferase 2 (291 aa).

The chain crosses the membrane as a helical span at residues 18–38 (WFLAVALAGLIGGAMLITSFI).

The protein belongs to the methyltransferase superfamily.

Its subcellular location is the golgi apparatus membrane. Its function is as follows. Involved in the methylation of glucuronic acid of different plant cell wall component, but mainly on side chains of arabinogalactans. The protein is Arabinogalactan O-methyltransferase 2 of Arabidopsis thaliana (Mouse-ear cress).